The primary structure comprises 416 residues: Phakinin (416 aa).

Positions 1 to 48 (MSERRVAMDLPSGSNASMPLQRHRVSSLRGTRSPSSLDSPPASRTSAV) are disordered. S2 is modified (N-acetylserine). The interval 2-115 (SERRVAMDLP…HATAEDLGGC (114 aa)) is head. Residues S27, S33, S36, and S91 each carry the phosphoserine modification. Positions 28 to 48 (LRGTRSPSSLDSPPASRTSAV) are enriched in polar residues. The region spanning 105–416 (NHATAEDLGG…HALLDREESN (312 aa)) is the IF rod domain. Coiled coils occupy residues 199–240 (FRKA…SLSR) and 314–391 (LAAA…ERAH). The tract at residues 397-416 (GQLQKDVASYHALLDREESN) is tail.

This sequence belongs to the intermediate filament family. As to quaternary structure, part of a complex required for lens intermediate filament formation composed of BFSP1, BFSP2, and CRYAA. Found in a complex composed of PPL (via C-terminal linker domain), BFSP1 and BFSP2 in the retinal lens. Within the complex interacts with PPL (via C-terminal linker domain) and with BFSP1. Identified in a complex that contains VIM, EZR, AHNAK, BFSP1, BFSP2, ANK2, PLEC, PRX and spectrin. Interacts with LGSN. Interacts with VIM. As to expression, expressed in the deep and shallow cortices of the retina lens (at protein level).

It is found in the cell membrane. It localises to the cytoplasm. Its subcellular location is the cytoskeleton. The protein resides in the cell cortex. Its function is as follows. Required for the correct formation of lens intermediate filaments as part of a complex composed of BFSP1, BFSP2 and CRYAA. Plays a role in maintenance of retinal lens optical clarity. The chain is Phakinin from Rattus norvegicus (Rat).